A 1858-amino-acid chain; its full sequence is Inactive histone-lysine N-methyltransferase 2E (1858 aa).

An HCFC1-binding motif (HBM) motif is present at residues 63-66 (DHNY). The PHD-type zinc finger occupies 118 to 166 (VTRCICGFTHDDGYMICCDKCSVWQHIDCMGIDRQHIPDTYLCERCQPR). Residues C121, C123, C135, C138, H143, C146, C160, and C163 each contribute to the Zn(2+) site. Positions 217-269 (ASRVSKVNDKRRKKSGEKEQHISKCKKAFREGSRKSSRVKGSAPEIDPSSDGS) are disordered. Residues 232 to 250 (GEKEQHISKCKKAFREGSR) show a composition bias toward basic and acidic residues. An SET domain is found at 330–447 (PPVESHIQKN…KGTEITIAFD (118 aa)). S435 is a glycosylation site (O-linked (GlcNAc) serine). An O-linked (GlcNAc) threonine glycan is attached at T440. Residues 475–530 (SESMENINSGYETRRKKGKKDKDISKEKDTQNQNITLDCEGTTNKMKSPETKQRKL) are disordered. Basic and acidic residues predominate over residues 494-504 (KDKDISKEKDT). Polar residues predominate over residues 505–520 (QNQNITLDCEGTTNKM). Positions 559-615 (VEMESEEQIAERKRKMTREERKMEAILQAFARLEKREKRREQALERISTAKTEVKTE) form a coiled coil. S623 bears the Phosphoserine mark. Residues 630–687 (EQAKEENASKPTPAKVNRTKQRKSFSRSRTHIGQQRRRHRTVSMCSDIQPSSPDIEVT) are disordered. Residues 646–670 (NRTKQRKSFSRSRTHIGQQRRRHRT) show a composition bias toward basic residues. Polar residues predominate over residues 672–687 (SMCSDIQPSSPDIEVT). A phosphoserine mark is found at S837 and S845. Low complexity-rich tracts occupy residues 887 to 901 (TSTP…PTHT) and 933 to 957 (PVTP…PESS). 2 disordered regions span residues 887 to 960 (TSTP…SPEI) and 1039 to 1068 (LETP…SSWV). Residues 1039 to 1048 (LETPAHDRAE) are compositionally biased toward basic and acidic residues. Residues 1049 to 1068 (PNSQLDSTHSGRGTMYSSWV) are compositionally biased toward polar residues. S1070 is modified (phosphoserine). Disordered stretches follow at residues 1164–1561 (KRQR…QNQQ) and 1581–1835 (VFTS…PVPG). Polar residues-rich tracts occupy residues 1186–1206 (PHAS…NDNG) and 1222–1235 (TVYN…SNNC). At S1273 the chain carries Phosphoserine. A compositionally biased stretch (basic and acidic residues) spans 1273–1282 (SDHRKDKDSG). Low complexity-rich tracts occupy residues 1285–1303 (SPCV…SSHS) and 1349–1362 (KSPP…SPGS). S1359 is modified (phosphoserine). 2 stretches are compositionally biased toward polar residues: residues 1400–1432 (QQKQ…SQKL) and 1506–1542 (LPAN…LNST). The span at 1543–1553 (APPPPPPPPPS) shows a compositional bias: pro residues. Over residues 1581 to 1599 (VFTSGPNQALPGTTSQQTV) the composition is skewed to polar residues. Pro residues predominate over residues 1626-1637 (VPPPPPPPPAPG). The segment covering 1642–1651 (QQPNSHQQHS) has biased composition (polar residues). The span at 1677–1687 (LPPPPPPPGPA) shows a compositional bias: pro residues. Positions 1698–1711 (TGLQGLQAQHQHVV) are enriched in polar residues. The segment covering 1714–1724 (APPPPPPPPPS) has biased composition (pro residues). Positions 1798 to 1808 (QGPNSIPTPTA) are enriched in polar residues.

Belongs to the class V-like SAM-binding methyltransferase superfamily. Histone-lysine methyltransferase family. TRX/MLL subfamily. In terms of assembly, component of a complex composed of KMT2E (isoform 3), OGT and USP7; the complex stabilizes KMT2E, preventing KMT2E ubiquitination and proteasomal-mediated degradation. Isoform 3 interacts (via N-terminus) with OGT (via TRP repeats). Isoform 3 interacts with deubiquitinating enzyme USP7 (via MATH domain). Isoform 3 interacts (via HBM motif) with HCFC1 (via Kelch domain). Isoform 3 interacts with E2F1; the interaction is probably indirect and is mediated via HCFC1. In terms of processing, ubiquitinated. Deubiquitinated by USP7. O-glycosylated at Ser-435 and Thr-440 in the SET domain by OGT which probably prevents KMT2E proteasomal-mediated degradation. As to expression, widely expressed in both adult and fetal tissues. Highest levels of expression observed in fetal thymus and kidney and in adult hematopoietic tissues, jejunum and cerebellum. Isoform NKp44L: Not detected on circulating cells from healthy individuals, but is expressed on a large panel of tumor and transformed cells.

Its subcellular location is the chromosome. It is found in the cytoplasm. The protein resides in the cytoskeleton. The protein localises to the microtubule organizing center. It localises to the centrosome. Its subcellular location is the nucleus speckle. It is found in the nucleus. The protein resides in the nucleoplasm. The protein localises to the cell membrane. Its function is as follows. Associates with chromatin regions downstream of transcriptional start sites of active genes and thus regulates gene transcription. Chromatin interaction is mediated via the binding to tri-methylated histone H3 at 'Lys-4' (H3K4me3). Key regulator of hematopoiesis involved in terminal myeloid differentiation and in the regulation of hematopoietic stem cell (HSCs) self-renewal by a mechanism that involves DNA methylation. Also acts as an important cell cycle regulator, participating in cell cycle regulatory network machinery at multiple cell cycle stages including G1/S transition, S phase progression and mitotic entry. Recruited to E2F1 responsive promoters by HCFC1 where it stimulates tri-methylation of histone H3 at 'Lys-4' and transcriptional activation and thereby facilitates G1 to S phase transition. During myoblast differentiation, required to suppress inappropriate expression of S-phase-promoting genes and maintain expression of determination genes in quiescent cells. In terms of biological role, cellular ligand for NCR2/NKp44, may play a role as a danger signal in cytotoxicity and NK-cell-mediated innate immunity. This Homo sapiens (Human) protein is Inactive histone-lysine N-methyltransferase 2E (KMT2E).